The following is a 190-amino-acid chain: DNA-binding transcriptional repressor TetR (190 aa).

Positions 6 to 66 (ETRSAALLAV…AALDAHDASF (61 aa)) constitute an HTH tetR-type domain. The H-T-H motif DNA-binding region spans 29–48 (SMDSVAALAHASKTTIYRRW).

In terms of assembly, homodimer.

Binds to its own palindromic promoter and represses transcription of its operon; addition of tetracycline or doxycycline (but not tigecycline) interferes with DNA binding. Addition of TetX to the DNA-TetR-antibiotic complex restores DNA binding. The sequence is that of DNA-binding transcriptional repressor TetR from Mycobacteroides abscessus (strain ATCC 19977 / DSM 44196 / CCUG 20993 / CIP 104536 / JCM 13569 / NCTC 13031 / TMC 1543 / L948) (Mycobacterium abscessus).